Consider the following 618-residue polypeptide: MLWQALRRFGQKLVRRRVLELGMGETRLARCLSTLDLVALGVGSTLGAGVYVLAGEVAKDKAGPSIVICFLVAALSSVLAGLCYAEFGARVPGSGSAYLYSYVTVGELWAFTTGWNLILSYVIGTASVARAWSSAFDNLIGNHISRTLKGTILLKMPHVLAEYPDFFALALVLLLTGLLVLGASKSALVTKVFTGMNLLVLSFVIISGFIKGELRNWKLTKEDYCLTMSESNGTCSLDSMGSGGFMPFGLEGILRGAATCFYAFVGFDCIATTGEEAQNPQRSIPMGIVISMFICFLAYFGVSSALTLMMPYYKLHPESPLPEAFSYVGWEPARYLVAIGSLCALSTSLLGSMFPMPRVMYSMAEDGLLFRVLAKVHSVTHIPIVATLVSGVIAAFMAFLFELTDLVDLMSIGTLLAHSLVSICVLILRYQPDQEMKSVEEEMELQEETLEAEKLTVQALFCPVNSIPTLLSGRVVYVCSSLLAVLLTVLCLVLTWWTTPLRSGDPVWVTVVVLILGLILAISGVIWRQPQNRTPLHFKVPAVPLLPLVSIFVNVYLMMQMTAGTWARFGIWMLIGFAIYFGYGIQHSMKEVKNHQTLPKTRAQTIDLDLTTSCVHSI.

Over methionine 1 to aspartate 36 the chain is Cytoplasmic. A helical transmembrane segment spans residues leucine 37–valine 57. Residues alanine 58–lysine 61 are Extracellular-facing. A helical transmembrane segment spans residues alanine 62–leucine 82. The Cytoplasmic portion of the chain corresponds to cysteine 83–glutamate 107. A helical membrane pass occupies residues leucine 108 to valine 128. Residues alanine 129–glutamate 162 lie on the Extracellular side of the membrane. Residues tyrosine 163–alanine 183 form a helical membrane-spanning segment. Topologically, residues serine 184–lysine 191 are cytoplasmic. A helical membrane pass occupies residues valine 192–glycine 212. Topologically, residues glutamate 213 to glycine 244 are extracellular. Residue asparagine 232 is glycosylated (N-linked (GlcNAc...) asparagine). Residues phenylalanine 245–valine 265 traverse the membrane as a helical segment. The Cytoplasmic segment spans residues glycine 266–proline 285. Residues methionine 286 to leucine 306 form a helical membrane-spanning segment. Residues threonine 307–tyrosine 335 lie on the Extracellular side of the membrane. A helical transmembrane segment spans residues leucine 336 to methionine 356. The Cytoplasmic segment spans residues proline 357–threonine 380. Residues histidine 381–phenylalanine 401 traverse the membrane as a helical segment. At glutamate 402–leucine 406 the chain is on the extracellular side. The chain crosses the membrane as a helical span at residues valine 407–isoleucine 427. Over leucine 428 to arginine 474 the chain is Cytoplasmic. A helical transmembrane segment spans residues valine 475 to threonine 495. Residues tryptophan 496 to proline 506 are Extracellular-facing. The helical transmembrane segment at valine 507–tryptophan 527 threads the bilayer. The Cytoplasmic portion of the chain corresponds to arginine 528–lysine 539. Residues valine 540–glutamine 560 traverse the membrane as a helical segment. At methionine 561 to arginine 568 the chain is on the extracellular side. The helical transmembrane segment at phenylalanine 569 to methionine 589 threads the bilayer. At lysine 590–isoleucine 618 the chain is on the cytoplasmic side. At threonine 605 the chain carries Phosphothreonine. The residue at position 617 (serine 617) is a Phosphoserine.

It belongs to the amino acid-polyamine-organocation (APC) superfamily. Cationic amino acid transporter (CAT) (TC 2.A.3.3) family. In terms of processing, N-glycosylated. Expressed in adult brain and in a wide variety of embryonic tissues.

It localises to the cell membrane. It catalyses the reaction L-arginine(in) = L-arginine(out). It carries out the reaction L-lysine(in) = L-lysine(out). The enzyme catalyses L-ornithine(in) = L-ornithine(out). In terms of biological role, uniporter that mediates the uptake of cationic L-amino acids such as L-arginine, L-lysine and L-ornithine. The transport is sodium ions- and pH-independent, moderately trans-stimulated and is mediated by passive diffusion. The chain is Cationic amino acid transporter 3 from Mus musculus (Mouse).